Here is an 81-residue protein sequence, read N- to C-terminus: Sulfur carrier protein TusA (81 aa).

The Cysteine persulfide intermediate role is filled by C20.

It belongs to the sulfur carrier protein TusA family.

The protein localises to the cytoplasm. In terms of biological role, sulfur carrier protein which probably makes part of a sulfur-relay system. This is Sulfur carrier protein TusA from Colwellia psychrerythraea (strain 34H / ATCC BAA-681) (Vibrio psychroerythus).